The chain runs to 378 residues: Phosphoglycerate kinase (378 aa).

Residues valine 1, aspartate 2, phenylalanine 3, asparagine 4, asparagine 16, arginine 17, serine 40, histidine 41, glycine 43, arginine 44, leucine 99, arginine 100, histidine 147, and arginine 148 each contribute to the (2R)-3-phosphoglycerate site. An ADP-binding site is contributed by glycine 191. Glycine 191 is a CDP binding site. 2 residues coordinate AMP: alanine 192 and lysine 193. Alanine 192 lines the ATP pocket. Residue alanine 192 coordinates Mg(2+). Aspartate 196 is a binding site for CDP. Residue aspartate 196 participates in Mg(2+) binding. Residue lysine 197 coordinates AMP. Residue lysine 197 participates in ATP binding. Glycine 215 is an ADP binding site. A CDP-binding site is contributed by glycine 215. 2 residues coordinate AMP: glycine 216 and glycine 288. Residues glycine 216 and glycine 288 each contribute to the ATP site. Glycine 313 and phenylalanine 318 together coordinate CDP. Phenylalanine 318 is a binding site for ADP. An AMP-binding site is contributed by glutamate 319. Residues glutamate 319, aspartate 351, and threonine 352 each contribute to the ATP site. Aspartate 351 is a Mg(2+) binding site.

This sequence belongs to the phosphoglycerate kinase family. In terms of assembly, monomer. Mg(2+) serves as cofactor.

The catalysed reaction is (2R)-3-phosphoglycerate + ATP = (2R)-3-phospho-glyceroyl phosphate + ADP. Its pathway is carbohydrate degradation; glycolysis; pyruvate from D-glyceraldehyde 3-phosphate: step 2/5. The protein is Phosphoglycerate kinase (PGK) of Condylostoma magnum.